A 310-amino-acid chain; its full sequence is Acetaldehyde dehydrogenase 1 (310 aa).

An NAD(+)-binding site is contributed by 12–15; it reads SGNI. Cys132 serves as the catalytic Acyl-thioester intermediate. Residues 163-171 and Asn287 contribute to the NAD(+) site; that span reads SAGPGTRAN.

Belongs to the acetaldehyde dehydrogenase family.

It catalyses the reaction acetaldehyde + NAD(+) + CoA = acetyl-CoA + NADH + H(+). The polypeptide is Acetaldehyde dehydrogenase 1 (Pseudomonas putida (strain W619)).